A 406-amino-acid chain; its full sequence is CCA-adding enzyme (406 aa).

ATP contacts are provided by Gly-32 and Arg-35. Gly-32 and Arg-35 together coordinate CTP. Mg(2+)-binding residues include Asp-45 and Asp-47. Residues Arg-116, Asp-159, Arg-162, Arg-165, and Arg-168 each coordinate ATP. Arg-116, Asp-159, Arg-162, Arg-165, and Arg-168 together coordinate CTP.

This sequence belongs to the tRNA nucleotidyltransferase/poly(A) polymerase family. Bacterial CCA-adding enzyme type 3 subfamily. In terms of assembly, homodimer. Mg(2+) is required as a cofactor.

It catalyses the reaction a tRNA precursor + 2 CTP + ATP = a tRNA with a 3' CCA end + 3 diphosphate. It carries out the reaction a tRNA with a 3' CCA end + 2 CTP + ATP = a tRNA with a 3' CCACCA end + 3 diphosphate. Catalyzes the addition and repair of the essential 3'-terminal CCA sequence in tRNAs without using a nucleic acid template. Adds these three nucleotides in the order of C, C, and A to the tRNA nucleotide-73, using CTP and ATP as substrates and producing inorganic pyrophosphate. tRNA 3'-terminal CCA addition is required both for tRNA processing and repair. Also involved in tRNA surveillance by mediating tandem CCA addition to generate a CCACCA at the 3' terminus of unstable tRNAs. While stable tRNAs receive only 3'-terminal CCA, unstable tRNAs are marked with CCACCA and rapidly degraded. The chain is CCA-adding enzyme from Enterococcus faecalis (strain ATCC 700802 / V583).